Reading from the N-terminus, the 222-residue chain is (4-{4-[2-(gamma-L-glutamylamino)ethyl]phenoxymethyl}furan-2-yl)methanamine synthase (222 aa).

This sequence belongs to the MfnF family.

The catalysed reaction is gamma-L-glutamyltyramine + [5-(aminomethyl)furan-3-yl]methyl diphosphate = (4-{4-[2-(gamma-L-glutamylamino)ethyl]phenoxymethyl}furan-2-yl)methanamine + diphosphate. It functions in the pathway cofactor biosynthesis; methanofuran biosynthesis. Its function is as follows. Catalyzes the condensation between 5-(aminomethyl)-3-furanmethanol diphosphate (F1-PP) and gamma-glutamyltyramine to produce APMF-Glu. The sequence is that of (4-{4-[2-(gamma-L-glutamylamino)ethyl]phenoxymethyl}furan-2-yl)methanamine synthase from Methanococcus vannielii.